Consider the following 411-residue polypeptide: Adenylosuccinate synthetase (411 aa).

GTP-binding positions include 11–17 (GDEGKGK) and 39–41 (GHT). Asp12 acts as the Proton acceptor in catalysis. Mg(2+) contacts are provided by Asp12 and Gly39. IMP-binding positions include 12 to 15 (DEGK), 37 to 40 (NAGH), Thr121, Arg135, Gln215, Thr230, and Arg294. The Proton donor role is filled by His40. 290 to 296 (TTTKRPR) is a substrate binding site. GTP is bound by residues Arg296, 322–324 (KLD), and 400–402 (STS).

Belongs to the adenylosuccinate synthetase family. Homodimer. It depends on Mg(2+) as a cofactor.

The protein localises to the cytoplasm. The enzyme catalyses IMP + L-aspartate + GTP = N(6)-(1,2-dicarboxyethyl)-AMP + GDP + phosphate + 2 H(+). The protein operates within purine metabolism; AMP biosynthesis via de novo pathway; AMP from IMP: step 1/2. Plays an important role in the de novo pathway of purine nucleotide biosynthesis. Catalyzes the first committed step in the biosynthesis of AMP from IMP. The polypeptide is Adenylosuccinate synthetase (Helicobacter pylori (strain P12)).